Consider the following 149-residue polypeptide: MRNYDLSPLLRQWIGFDKLASSMQGSQEPIDFPPYNIEKKDDNHYRITLALAGFRQSDLDIEVEGPRLTVKGSPAPTEKAVEYLHQGLVFKPFTLSFTLAEHLHVSDAHFENGLLHIDLVRDVPEALQPQRIAIGGGRPALNQQPAEDA.

In terms of domain architecture, sHSP spans 26 to 137 (SQEPIDFPPY…QPQRIAIGGG (112 aa)).

Belongs to the small heat shock protein (HSP20) family. In terms of assembly, homodimer. Forms homomultimers of about 100-150 subunits at optimal growth temperatures. Conformation changes to oligomers at high temperatures or high ionic concentrations. The decrease in size of the multimers is accompanied by an increase in chaperone activity.

It is found in the cytoplasm. Functionally, associates with aggregated proteins, together with IbpA, to stabilize and protect them from irreversible denaturation and extensive proteolysis during heat shock and oxidative stress. Aggregated proteins bound to the IbpAB complex are more efficiently refolded and reactivated by the ATP-dependent chaperone systems ClpB and DnaK/DnaJ/GrpE. Its activity is ATP-independent. The protein is Small heat shock protein IbpB of Pectobacterium carotovorum subsp. carotovorum (strain PC1).